A 125-amino-acid chain; its full sequence is DCPPDWSSYEGHCYRFFKEWMHWDDAEEFCTEQQTGAHLVSFQSKEEADFVRSLTSEMLKGDVVWIGLSDVWNKCRFEWTDGMEFDYDDYYLIAEYECVASKPTNNKWWIIPCTRFKNFVCEFQA.

Disulfide bonds link cysteine 2–cysteine 13, cysteine 30–cysteine 121, and cysteine 98–cysteine 113. Residues 9 to 122 (YEGHCYRFFK…CTRFKNFVCE (114 aa)) form the C-type lectin domain.

This sequence belongs to the snaclec family. As to quaternary structure, heterodimer of subunits alpha and beta; disulfide-linked. Botrocetin and vWF form a soluble complex. Expressed by the venom gland.

The protein resides in the secreted. Its function is as follows. Snaclec that binds to von Willebrand factor (VWF) and induces its interaction with GPIbalpha (GP1BA) (via the vWF A1 domain), resulting in platelet aggregation. The protein is Snaclec botrocetin subunit beta of Bothrops jararaca (Jararaca).